Reading from the N-terminus, the 637-residue chain is Protein RRP6-like 1 (637 aa).

The 166-residue stretch at 118–283 (VEEVKDLEDL…YIYDVMRMEL (166 aa)) folds into the 3'-5' exonuclease domain. The HRDC domain occupies 334–414 (NAVQLSIVAG…RRSMQNAAAF (81 aa)). A compositionally biased stretch (acidic residues) spans 553–565 (VDDDDDDDDDESY). A disordered region spans residues 553 to 624 (VDDDDDDDDD…EDMRRRSEKH (72 aa)). Polar residues predominate over residues 580-598 (ETPSKGSPSLTQKPKTCNT). Positions 602–614 (VLDDDDDSESRED) are enriched in acidic residues.

Its subcellular location is the nucleus. It localises to the nucleoplasm. Its function is as follows. Acts as an important epigenetic regulator through multiple silencing mechanisms. Involved in transcriptional gene silencing (TGS). Plays a role for DNA methylation in the RNA-directed DNA methylation (RdDM) pathway. Contributes to the methylation status of the retrotransposon SN1. Required for DNA methylation only at a subset of RdDM target loci. Plays a regulatory role in RdDM through retention of non-coding RNAs (ncRNAs) in normal cells. Helps to retain Pol V-transcribed RNAs in chromatin to enable their scaffold function and is required for genome-wide Pol IV-dependent siRNA (24 nt siRNA) production that may involve retention of Pol IV transcripts. Involved in association with RRP6L2 in the silencing of the solo LTR locus. Controls levels of ncRNAs from the solo LTR locus. Seems to function independently of the RdDM pathway. Functions redundantly with RRP6L2 in the regulation of FLC locus. Participates in the maintenance of trimethylated 'Lys-27' (H3K27me3) at FLC locus via the regulation of antisense long non-coding RNAs (lncRNAs) and the regulation of diverse antisense RNAs derived from the FLC locus. Seems not involved in the exosomal RNA degradation. Can complement the growth defect of a yeast mutant lacking RRP6 exonuclease. The chain is Protein RRP6-like 1 from Arabidopsis thaliana (Mouse-ear cress).